Here is a 508-residue protein sequence, read N- to C-terminus: Lysine--tRNA ligase (508 aa).

The Mg(2+) site is built by glutamate 418 and glutamate 425.

This sequence belongs to the class-II aminoacyl-tRNA synthetase family. Homodimer. The cofactor is Mg(2+).

It localises to the cytoplasm. It catalyses the reaction tRNA(Lys) + L-lysine + ATP = L-lysyl-tRNA(Lys) + AMP + diphosphate. The chain is Lysine--tRNA ligase from Burkholderia multivorans (strain ATCC 17616 / 249).